The primary structure comprises 257 residues: uncharacterized protein (257 aa).

Residues 1–22 (MIHSRKLRLWLYLVLLAVFIGA) form the signal peptide. Residue C23 is the site of N-palmitoyl cysteine attachment. C23 is lipidated: S-diacylglycerol cysteine.

This sequence belongs to the staphylococcal tandem lipoprotein family.

The protein localises to the cell membrane. This is an uncharacterized protein from Staphylococcus aureus (strain Mu50 / ATCC 700699).